We begin with the raw amino-acid sequence, 429 residues long: Cyclin-B2-2 (429 aa).

Residues 66–98 form a disordered region; it reads SQRKQESCDKKKLDSLHPSISRSQEETKKLKPS. Positions 68–80 are enriched in basic and acidic residues; the sequence is RKQESCDKKKLDS.

It belongs to the cyclin family. Cyclin AB subfamily. In terms of assembly, interacts with CDC20-1 and CDC20-2. Expressed in roots.

The protein is Cyclin-B2-2 (CYCB2-2) of Arabidopsis thaliana (Mouse-ear cress).